Reading from the N-terminus, the 481-residue chain is Serine--tRNA ligase (481 aa).

An L-serine-binding site is contributed by Thr-284 to Glu-286. Position 315–317 (Arg-315–Glu-317) interacts with ATP. Glu-338 contributes to the L-serine binding site. Residue Glu-405–Ser-408 participates in ATP binding. Residue Ser-440 participates in L-serine binding.

It belongs to the class-II aminoacyl-tRNA synthetase family. Type-1 seryl-tRNA synthetase subfamily. In terms of assembly, homodimer. The tRNA molecule binds across the dimer.

The protein localises to the cytoplasm. It catalyses the reaction tRNA(Ser) + L-serine + ATP = L-seryl-tRNA(Ser) + AMP + diphosphate + H(+). The catalysed reaction is tRNA(Sec) + L-serine + ATP = L-seryl-tRNA(Sec) + AMP + diphosphate + H(+). It functions in the pathway aminoacyl-tRNA biosynthesis; selenocysteinyl-tRNA(Sec) biosynthesis; L-seryl-tRNA(Sec) from L-serine and tRNA(Sec): step 1/1. Functionally, catalyzes the attachment of serine to tRNA(Ser). Is also able to aminoacylate tRNA(Sec) with serine, to form the misacylated tRNA L-seryl-tRNA(Sec), which will be further converted into selenocysteinyl-tRNA(Sec). The chain is Serine--tRNA ligase from Rhodopseudomonas palustris (strain BisB18).